Here is a 1331-residue protein sequence, read N- to C-terminus: Lysine-specific demethylase 3A-A (1331 aa).

Disordered stretches follow at residues L243 to D280, T358 to L381, and K497 to P532. Positions T266–D280 are enriched in basic and acidic residues. The C6-type zinc finger occupies C683–C708. The LXXLL motif signature appears at L894–L898. The region spanning R1086–R1291 is the JmjC domain. Fe cation contacts are provided by H1130, D1132, and H1259.

This sequence belongs to the JHDM2 histone demethylase family. Fe(2+) serves as cofactor.

The protein localises to the cytoplasm. It is found in the nucleus. It carries out the reaction N(6),N(6)-dimethyl-L-lysyl(9)-[histone H3] + 2 2-oxoglutarate + 2 O2 = L-lysyl(9)-[histone H3] + 2 formaldehyde + 2 succinate + 2 CO2. Its function is as follows. Histone demethylase that specifically demethylates 'Lys-9' of histone H3, thereby playing a central role in histone code. Preferentially demethylates mono- and dimethylated H3 'Lys-9' residue, with a preference for dimethylated residue, while it has weak or no activity on trimethylated H3 'Lys-9'. Demethylation of Lys residue generates formaldehyde and succinate. The sequence is that of Lysine-specific demethylase 3A-A (kdm3a-a) from Xenopus laevis (African clawed frog).